The sequence spans 214 residues: Probable nicotinate-nucleotide adenylyltransferase (214 aa).

It belongs to the NadD family.

It catalyses the reaction nicotinate beta-D-ribonucleotide + ATP + H(+) = deamido-NAD(+) + diphosphate. It participates in cofactor biosynthesis; NAD(+) biosynthesis; deamido-NAD(+) from nicotinate D-ribonucleotide: step 1/1. Its function is as follows. Catalyzes the reversible adenylation of nicotinate mononucleotide (NaMN) to nicotinic acid adenine dinucleotide (NaAD). This chain is Probable nicotinate-nucleotide adenylyltransferase, found in Mycobacterium bovis (strain ATCC BAA-935 / AF2122/97).